Reading from the N-terminus, the 202-residue chain is ATP-dependent Clp protease proteolytic subunit (202 aa).

S107 serves as the catalytic Nucleophile. H132 is a catalytic residue.

The protein belongs to the peptidase S14 family. Fourteen ClpP subunits assemble into 2 heptameric rings which stack back to back to give a disk-like structure with a central cavity, resembling the structure of eukaryotic proteasomes.

Its subcellular location is the cytoplasm. It carries out the reaction Hydrolysis of proteins to small peptides in the presence of ATP and magnesium. alpha-casein is the usual test substrate. In the absence of ATP, only oligopeptides shorter than five residues are hydrolyzed (such as succinyl-Leu-Tyr-|-NHMec, and Leu-Tyr-Leu-|-Tyr-Trp, in which cleavage of the -Tyr-|-Leu- and -Tyr-|-Trp bonds also occurs).. Cleaves peptides in various proteins in a process that requires ATP hydrolysis. Has a chymotrypsin-like activity. Plays a major role in the degradation of misfolded proteins. The chain is ATP-dependent Clp protease proteolytic subunit from Shewanella amazonensis (strain ATCC BAA-1098 / SB2B).